Consider the following 496-residue polypeptide: 3-octaprenyl-4-hydroxybenzoate carboxy-lyase (496 aa).

Position 181 (Asn181) interacts with Mn(2+). Prenylated FMN is bound by residues 184–186 (IYR), 198–200 (RWL), and 203–204 (RG). Glu247 lines the Mn(2+) pocket. Catalysis depends on Asp296, which acts as the Proton donor.

Belongs to the UbiD family. In terms of assembly, homohexamer. It depends on prenylated FMN as a cofactor. Requires Mn(2+) as cofactor.

It is found in the cell membrane. It catalyses the reaction a 4-hydroxy-3-(all-trans-polyprenyl)benzoate + H(+) = a 2-(all-trans-polyprenyl)phenol + CO2. Its pathway is cofactor biosynthesis; ubiquinone biosynthesis. Catalyzes the decarboxylation of 3-octaprenyl-4-hydroxy benzoate to 2-octaprenylphenol, an intermediate step in ubiquinone biosynthesis. The sequence is that of 3-octaprenyl-4-hydroxybenzoate carboxy-lyase from Azoarcus sp. (strain BH72).